We begin with the raw amino-acid sequence, 71 residues long: MGSFSLLHWLVVLVIVLLVFGTKRLANGAKDIGSAIKEFKKSLHEDDKPTDQLGSTSQSTASGPQQDHGKH.

A helical transmembrane segment spans residues 1-21 (MGSFSLLHWLVVLVIVLLVFG). The segment at 43–71 (LHEDDKPTDQLGSTSQSTASGPQQDHGKH) is disordered. Positions 52–65 (QLGSTSQSTASGPQ) are enriched in polar residues.

It belongs to the TatA/E family. As to quaternary structure, the Tat system comprises two distinct complexes: a TatABC complex, containing multiple copies of TatA, TatB and TatC subunits, and a separate TatA complex, containing only TatA subunits. Substrates initially bind to the TatABC complex, which probably triggers association of the separate TatA complex to form the active translocon.

It localises to the cell inner membrane. Part of the twin-arginine translocation (Tat) system that transports large folded proteins containing a characteristic twin-arginine motif in their signal peptide across membranes. TatA could form the protein-conducting channel of the Tat system. The sequence is that of Sec-independent protein translocase protein TatA from Xylella fastidiosa (strain M12).